A 427-amino-acid polypeptide reads, in one-letter code: Chitin disaccharide deacetylase (427 aa).

The N-terminal stretch at 1 to 22 (MKLNKLAIATLVSAALSQYAFA) is a signal peptide. A NodB homology domain is found at 28 to 326 (GTIYLTFDDG…LAKQAGYVFD (299 aa)). Chitin-binding type-3 domains follow at residues 333–375 (PNWQ…SSLW) and 382–419 (TNWT…TPNS).

This sequence belongs to the polysaccharide deacetylase family. Carbohydrate-binding module 12 subfamily.

The catalysed reaction is N,N'-diacetylchitobiose + H2O = N-acetyl-beta-D-glucosaminyl-(1-&gt;4)-D-glucosamine + acetate. It participates in glycan degradation; chitin degradation. In terms of biological role, specifically catalyzes the degradation of N,N'-diacetylchitobiose. Key enzyme in the chitin catabolic cascade. This chain is Chitin disaccharide deacetylase (deaA), found in Vibrio alginolyticus.